The following is a 101-amino-acid chain: MSNSGNIKLINIGFGNIVSANRLIAIVSPDSAPIKRIIQEARERGMLIDATYGRRTRAVIITDSDHVILSAVQPETVAHRVIEPEEDFEEDIDVEDEVDKR.

It belongs to the RemA family.

The polypeptide is Putative regulatory protein Csac_2087 (Caldicellulosiruptor saccharolyticus (strain ATCC 43494 / DSM 8903 / Tp8T 6331)).